The following is a 518-amino-acid chain: Chromosomal replication initiator protein DnaA (518 aa).

Residues 1–72 (MTLAEFWPLC…VREELAAGRS (72 aa)) form a domain I, interacts with DnaA modulators region. Residues 72-180 (SAFVFKPGEG…DAEEARYEQT (109 aa)) are domain II. The tract at residues 181 to 397 (NLSPDYTFDT…GAFNRVGASS (217 aa)) is domain III, AAA+ region. Gly-225, Gly-227, Lys-228, and Thr-229 together coordinate ATP. Positions 398–518 (RFMNRPVIDI…YEKLLILIQN (121 aa)) are domain IV, binds dsDNA.

This sequence belongs to the DnaA family. As to quaternary structure, oligomerizes as a right-handed, spiral filament on DNA at oriC.

It localises to the cytoplasm. In terms of biological role, plays an essential role in the initiation and regulation of chromosomal replication. ATP-DnaA binds to the origin of replication (oriC) to initiate formation of the DNA replication initiation complex once per cell cycle. Binds the DnaA box (a 9 base pair repeat at the origin) and separates the double-stranded (ds)DNA. Forms a right-handed helical filament on oriC DNA; dsDNA binds to the exterior of the filament while single-stranded (ss)DNA is stabiized in the filament's interior. The ATP-DnaA-oriC complex binds and stabilizes one strand of the AT-rich DNA unwinding element (DUE), permitting loading of DNA polymerase. After initiation quickly degrades to an ADP-DnaA complex that is not apt for DNA replication. Binds acidic phospholipids. This Neisseria meningitidis serogroup C / serotype 2a (strain ATCC 700532 / DSM 15464 / FAM18) protein is Chromosomal replication initiator protein DnaA.